The primary structure comprises 307 residues: Coproporphyrin III ferrochelatase (307 aa).

Fe-coproporphyrin III-binding positions include Tyr-12, Arg-29, Arg-45 to Tyr-46, Ser-53, and Tyr-124. Residues His-181 and Glu-263 each contribute to the Fe(2+) site.

It belongs to the ferrochelatase family.

The protein resides in the cytoplasm. The enzyme catalyses Fe-coproporphyrin III + 2 H(+) = coproporphyrin III + Fe(2+). It participates in porphyrin-containing compound metabolism; protoheme biosynthesis. In terms of biological role, involved in coproporphyrin-dependent heme b biosynthesis. Catalyzes the insertion of ferrous iron into coproporphyrin III to form Fe-coproporphyrin III. It can also insert iron into protoporphyrin IX, but it has a much stronger preference for coproprophyrin III as the substrate. The polypeptide is Coproporphyrin III ferrochelatase (Staphylococcus aureus (strain NCTC 8325 / PS 47)).